A 264-amino-acid polypeptide reads, in one-letter code: Thymidylate synthase (264 aa).

Position 21 (R21) interacts with dUMP. Residue H51 coordinates (6R)-5,10-methylene-5,6,7,8-tetrahydrofolate. 126-127 provides a ligand contact to dUMP; it reads RR. C146 acts as the Nucleophile in catalysis. Residues 166–169, N177, and 207–209 each bind dUMP; these read RSCD and HLY. Residue D169 coordinates (6R)-5,10-methylene-5,6,7,8-tetrahydrofolate. A263 provides a ligand contact to (6R)-5,10-methylene-5,6,7,8-tetrahydrofolate.

The protein belongs to the thymidylate synthase family. Bacterial-type ThyA subfamily. Homodimer.

It localises to the cytoplasm. The catalysed reaction is dUMP + (6R)-5,10-methylene-5,6,7,8-tetrahydrofolate = 7,8-dihydrofolate + dTMP. The protein operates within pyrimidine metabolism; dTTP biosynthesis. Functionally, catalyzes the reductive methylation of 2'-deoxyuridine-5'-monophosphate (dUMP) to 2'-deoxythymidine-5'-monophosphate (dTMP) while utilizing 5,10-methylenetetrahydrofolate (mTHF) as the methyl donor and reductant in the reaction, yielding dihydrofolate (DHF) as a by-product. This enzymatic reaction provides an intracellular de novo source of dTMP, an essential precursor for DNA biosynthesis. The polypeptide is Thymidylate synthase (Shewanella amazonensis (strain ATCC BAA-1098 / SB2B)).